The chain runs to 550 residues: MISDNVKKGVIRTPNRALLKACGYTDEDMEKPFIGIVNSFTEVVPGHIHLRTLSEAAKHGVYANGGTPFEFNTIGICDGIAMGHEGMKYSLPSREIIADAVESMARAHGFDGLVLIPTCDKIVPGMIMGALRLNIPFIVVTGGPMLPGEFQGKKYELISLFEGVGEYQVGKITEEELKCIEDCACSGAGSCAGLYTANSMACLTEALGLSLPMCATTHAVDAQKVRLAKKSGSKIVDMVKEDLKPTDILTKEAFENAILVDLALGGSTNTTLHIPAIANEIENKFITLDDFDRLSDEVPHIASIKPGGEHYMIDLHNAGGIPAVLNVLKEKIRDTKTVDGRSILEIAESVKYINYDVIRKVEAPVHETAGLRVLKGNLAPNGCVVKIGAVHPKMYKHDGPAKVYNSEDEAISAILGGKIVEGDVIVIRYEGPSGGPGMREMLSPTSAICGMGLDDSVALITDGRFSGGSRGPCIGHVSPEAAAGGVIAAIENGDIIKIDMIEKEINVDLDESVIKERLSKLGEFEPKIKKGYLSRYSKLVSSADEGAVLK.

Asp78 contributes to the Mg(2+) binding site. Cys119 is a binding site for [2Fe-2S] cluster. Positions 120 and 121 each coordinate Mg(2+). Lys121 carries the N6-carboxylysine modification. Cys191 is a binding site for [2Fe-2S] cluster. Residue Glu440 coordinates Mg(2+). Ser466 (proton acceptor) is an active-site residue.

This sequence belongs to the IlvD/Edd family. In terms of assembly, homodimer. [2Fe-2S] cluster is required as a cofactor. The cofactor is Mg(2+).

The catalysed reaction is (2R)-2,3-dihydroxy-3-methylbutanoate = 3-methyl-2-oxobutanoate + H2O. It carries out the reaction (2R,3R)-2,3-dihydroxy-3-methylpentanoate = (S)-3-methyl-2-oxopentanoate + H2O. It participates in amino-acid biosynthesis; L-isoleucine biosynthesis; L-isoleucine from 2-oxobutanoate: step 3/4. It functions in the pathway amino-acid biosynthesis; L-valine biosynthesis; L-valine from pyruvate: step 3/4. Its function is as follows. Functions in the biosynthesis of branched-chain amino acids. Catalyzes the dehydration of (2R,3R)-2,3-dihydroxy-3-methylpentanoate (2,3-dihydroxy-3-methylvalerate) into 2-oxo-3-methylpentanoate (2-oxo-3-methylvalerate) and of (2R)-2,3-dihydroxy-3-methylbutanoate (2,3-dihydroxyisovalerate) into 2-oxo-3-methylbutanoate (2-oxoisovalerate), the penultimate precursor to L-isoleucine and L-valine, respectively. The protein is Dihydroxy-acid dehydratase of Methanococcus maripaludis (strain DSM 14266 / JCM 13030 / NBRC 101832 / S2 / LL).